Here is a 408-residue protein sequence, read N- to C-terminus: Hepatocyte nuclear factor 4-gamma (408 aa).

Residues 9 to 84 (NCLCAICGDR…AGMKKEAVQN (76 aa)) constitute a DNA-binding region (nuclear receptor). NR C4-type zinc fingers lie at residues 12-32 (CAICGDRATGKHYGASSCDGC) and 48-72 (CRFSRQCVVDKDKRNQCRYCRLRKC). Serine 94 carries the post-translational modification Phosphoserine. In terms of domain architecture, NR LBD spans 99-328 (SNIPSINTLA…NLLQEMLLGG (230 aa)). The segment at 368 to 390 (ISTPETPLPSPPQGSGQEQYKIA) is disordered. Phosphothreonine occurs at positions 370 and 373. Phosphoserine is present on serine 377.

Belongs to the nuclear hormone receptor family. NR2 subfamily. As to expression, expressed in pancreas, kidney, small intestine and testis. Weakly expressed in colon. Not expressed in liver, skeletal muscle, lung, placenta, brain, heart, peripheral blood, ovary, prostate, thymus and spleen.

The protein localises to the nucleus. Transcription factor. Has a lower transcription activation potential than HNF4-alpha. This Homo sapiens (Human) protein is Hepatocyte nuclear factor 4-gamma (HNF4G).